The following is a 344-amino-acid chain: Uroporphyrinogen decarboxylase (344 aa).

Substrate-binding positions include 27-31, Phe-46, Asp-76, Tyr-151, Ser-206, and His-319; that span reads RQAGR.

The protein belongs to the uroporphyrinogen decarboxylase family. Homodimer.

The protein resides in the cytoplasm. The catalysed reaction is uroporphyrinogen III + 4 H(+) = coproporphyrinogen III + 4 CO2. It functions in the pathway porphyrin-containing compound metabolism; protoporphyrin-IX biosynthesis; coproporphyrinogen-III from 5-aminolevulinate: step 4/4. Functionally, catalyzes the decarboxylation of four acetate groups of uroporphyrinogen-III to yield coproporphyrinogen-III. In Halalkalibacterium halodurans (strain ATCC BAA-125 / DSM 18197 / FERM 7344 / JCM 9153 / C-125) (Bacillus halodurans), this protein is Uroporphyrinogen decarboxylase.